The chain runs to 353 residues: Putative glutamine synthetase (353 aa).

The GS beta-grasp domain occupies 19–102 (SIIEYVWIGG…VICDTYDVNG (84 aa)). Residues 109 to 353 (HRHNANIIFE…IILQTVCESD (245 aa)) enclose the GS catalytic domain.

Belongs to the glutamine synthetase family.

The catalysed reaction is L-glutamate + NH4(+) + ATP = L-glutamine + ADP + phosphate + H(+). This chain is Putative glutamine synthetase, found in Acanthamoeba polyphaga (Amoeba).